The sequence spans 240 residues: UDP-2,3-diacylglucosamine hydrolase (240 aa).

Mn(2+) contacts are provided by Asp-8, His-10, Asp-41, Asn-79, and His-114. 79 to 80 is a binding site for substrate; that stretch reads NR. Positions 122, 160, 164, 167, and 195 each coordinate substrate. The Mn(2+) site is built by His-195 and His-197.

Belongs to the LpxH family. The cofactor is Mn(2+).

The protein resides in the cell inner membrane. The catalysed reaction is UDP-2-N,3-O-bis[(3R)-3-hydroxytetradecanoyl]-alpha-D-glucosamine + H2O = 2-N,3-O-bis[(3R)-3-hydroxytetradecanoyl]-alpha-D-glucosaminyl 1-phosphate + UMP + 2 H(+). Its pathway is glycolipid biosynthesis; lipid IV(A) biosynthesis; lipid IV(A) from (3R)-3-hydroxytetradecanoyl-[acyl-carrier-protein] and UDP-N-acetyl-alpha-D-glucosamine: step 4/6. Hydrolyzes the pyrophosphate bond of UDP-2,3-diacylglucosamine to yield 2,3-diacylglucosamine 1-phosphate (lipid X) and UMP by catalyzing the attack of water at the alpha-P atom. Involved in the biosynthesis of lipid A, a phosphorylated glycolipid that anchors the lipopolysaccharide to the outer membrane of the cell. The sequence is that of UDP-2,3-diacylglucosamine hydrolase from Proteus mirabilis (strain HI4320).